Consider the following 296-residue polypeptide: Ribosomal RNA small subunit methyltransferase H (296 aa).

S-adenosyl-L-methionine is bound by residues 41-43 (GGH), Asp60, Phe87, Asp103, and Gln110.

It belongs to the methyltransferase superfamily. RsmH family.

The protein resides in the cytoplasm. The catalysed reaction is cytidine(1402) in 16S rRNA + S-adenosyl-L-methionine = N(4)-methylcytidine(1402) in 16S rRNA + S-adenosyl-L-homocysteine + H(+). Its function is as follows. Specifically methylates the N4 position of cytidine in position 1402 (C1402) of 16S rRNA. The polypeptide is Ribosomal RNA small subunit methyltransferase H (Synechococcus elongatus (strain ATCC 33912 / PCC 7942 / FACHB-805) (Anacystis nidulans R2)).